The following is a 283-amino-acid chain: Lipoyl synthase (283 aa).

[4Fe-4S] cluster contacts are provided by Cys-35, Cys-40, Cys-46, Cys-61, Cys-65, Cys-68, and Ser-273. The Radical SAM core domain occupies 47 to 262 (FRSRQATFLI…RERALAMGFK (216 aa)).

It belongs to the radical SAM superfamily. Lipoyl synthase family. [4Fe-4S] cluster is required as a cofactor.

The protein localises to the cytoplasm. It carries out the reaction [[Fe-S] cluster scaffold protein carrying a second [4Fe-4S](2+) cluster] + N(6)-octanoyl-L-lysyl-[protein] + 2 oxidized [2Fe-2S]-[ferredoxin] + 2 S-adenosyl-L-methionine + 4 H(+) = [[Fe-S] cluster scaffold protein] + N(6)-[(R)-dihydrolipoyl]-L-lysyl-[protein] + 4 Fe(3+) + 2 hydrogen sulfide + 2 5'-deoxyadenosine + 2 L-methionine + 2 reduced [2Fe-2S]-[ferredoxin]. It participates in protein modification; protein lipoylation via endogenous pathway; protein N(6)-(lipoyl)lysine from octanoyl-[acyl-carrier-protein]: step 2/2. Its function is as follows. Catalyzes the radical-mediated insertion of two sulfur atoms into the C-6 and C-8 positions of the octanoyl moiety bound to the lipoyl domains of lipoate-dependent enzymes, thereby converting the octanoylated domains into lipoylated derivatives. This chain is Lipoyl synthase, found in Geotalea uraniireducens (strain Rf4) (Geobacter uraniireducens).